Here is a 189-residue protein sequence, read N- to C-terminus: Probable pericyclase scpY (189 aa).

This sequence belongs to the pericyclase pydY family.

It functions in the pathway mycotoxin biosynthesis. Probable pericyclase; part of the gene scp cluster that mediates the biosynthesis of a hirsutellone-like compound that has still to be identified. The protein is Probable pericyclase scpY of Mollisia scopiformis (Conifer needle endophyte fungus).